The following is a 429-amino-acid chain: Glutamate-1-semialdehyde 2,1-aminomutase (429 aa).

An N6-(pyridoxal phosphate)lysine modification is found at Lys-265.

Belongs to the class-III pyridoxal-phosphate-dependent aminotransferase family. HemL subfamily. In terms of assembly, homodimer. Pyridoxal 5'-phosphate serves as cofactor.

It localises to the cytoplasm. It catalyses the reaction (S)-4-amino-5-oxopentanoate = 5-aminolevulinate. The protein operates within porphyrin-containing compound metabolism; protoporphyrin-IX biosynthesis; 5-aminolevulinate from L-glutamyl-tRNA(Glu): step 2/2. The polypeptide is Glutamate-1-semialdehyde 2,1-aminomutase (Ectopseudomonas mendocina (strain ymp) (Pseudomonas mendocina)).